Consider the following 347-residue polypeptide: Haptoglobin (347 aa).

An N-terminal signal peptide occupies residues 1 to 18 (MRALGAVVALLLCGQLFA). The Sushi domain occupies 31–88 (DSCPKPPEIPKGYVEHMVRYHCQTYYKLRTAGDGVYTLDSNKQWTNKVTGEKLPECEA). 2 cysteine pairs are disulfide-bonded: Cys52–Cys86 and Cys90–Cys207. The 243-residue stretch at 103-345 (IMGGSLDAKG…ILDWIQTTIA (243 aa)) folds into the Peptidase S1 domain. Asn125, Asn151, Asn183, and Asn232 each carry an N-linked (GlcNAc...) asparagine glycan. Cystine bridges form between Cys250/Cys281 and Cys292/Cys322. The tract at residues 259-264 (VPEKKT) is interaction with CD163.

Belongs to the peptidase S1 family. As to quaternary structure, tetramer of two alpha and two beta chains; disulfide-linked. The hemoglobin/haptoglobin complex is composed of a haptoglobin dimer bound to two hemoglobin alpha-beta dimers. Interacts with CD163. Interacts with ERGIC3. As to expression, expressed by the liver and secreted in plasma.

It localises to the secreted. Its function is as follows. As a result of hemolysis, hemoglobin is found to accumulate in the kidney and is secreted in the urine. Haptoglobin captures, and combines with free plasma hemoglobin to allow hepatic recycling of heme iron and to prevent kidney damage. Haptoglobin also acts as an antioxidant, has antibacterial activity and plays a role in modulating many aspects of the acute phase response. Hemoglobin/haptoglobin complexes are rapidly cleared by the macrophage CD163 scavenger receptor expressed on the surface of liver Kupfer cells through an endocytic lysosomal degradation pathway. This chain is Haptoglobin (HP), found in Sus scrofa (Pig).